A 185-amino-acid chain; its full sequence is Large ribosomal subunit protein uL30 (185 aa).

Belongs to the universal ribosomal protein uL30 family. As to quaternary structure, part of the 50S ribosomal subunit.

This is Large ribosomal subunit protein uL30 from Caldivirga maquilingensis (strain ATCC 700844 / DSM 13496 / JCM 10307 / IC-167).